The following is a 652-amino-acid chain: Small ribosomal subunit protein mS39 (652 aa).

The N-terminal 37 residues, 1–37 (MYLSRQLRLLPRANIACSLSSSGAHYTTAAPAEDAPI), are a transit peptide targeting the mitochondrion. PPR repeat units lie at residues 129 to 163 (DSVV…GNPI), 225 to 259 (TPQS…QVQL), 260 to 299 (DTNT…KLRP), 300 to 338 (NLGT…GVNP), and 547 to 581 (TGQM…QHRI).

It belongs to the mitochondrion-specific ribosomal protein mS39 family.

It localises to the mitochondrion. In terms of biological role, mitochondrial protein that may have a role in mitochondrial translation. Essential for larval development. The chain is Small ribosomal subunit protein mS39 from Drosophila melanogaster (Fruit fly).